Here is an 858-residue protein sequence, read N- to C-terminus: Receptor-like protein kinase ANXUR2 (858 aa).

The first 27 residues, 1–27, serve as a signal peptide directing secretion; that stretch reads MNEKLRILFSFLCFFYVLLVSPSQSNG. The Extracellular segment spans residues 28–431; that stretch reads QDISLSCGAS…VKKDFQGDKR (404 aa). N-linked (GlcNAc...) asparagine glycosylation is found at Asn133, Asn293, Asn303, and Asn331. The chain crosses the membrane as a helical span at residues 432–452; sequence ITAFVIGSAGGVAAVLFCALC. The Cytoplasmic portion of the chain corresponds to 453–858; it reads FTMYQRKRKF…FSQIVNPKGR (406 aa). The Protein kinase domain maps to 521–794; sequence FDESNVIGVG…GDVLWNLEFA (274 aa). ATP contacts are provided by residues 527 to 535 and Lys549; that span reads IGVGGFGKV. The active-site Proton acceptor is Asp645. Positions 800-858 are disordered; sequence TADGSRHRTPSNGGGSVDLGGGGGGVTVNISAGESDLGDDLSSEENSGIFSQIVNPKGR. The segment covering 811-825 has biased composition (gly residues); the sequence is NGGGSVDLGGGGGGV. A compositionally biased stretch (polar residues) spans 843-858; it reads EENSGIFSQIVNPKGR.

The protein belongs to the protein kinase superfamily. Ser/Thr protein kinase family. As to expression, expressed in pollen, but not in pistils or seedlings.

It is found in the cell membrane. It carries out the reaction L-seryl-[protein] + ATP = O-phospho-L-seryl-[protein] + ADP + H(+). It catalyses the reaction L-threonyl-[protein] + ATP = O-phospho-L-threonyl-[protein] + ADP + H(+). In terms of biological role, receptor-like protein kinase that controls pollen tube behavior by directing rupture at proper timing to release the sperm cell. This chain is Receptor-like protein kinase ANXUR2 (ANX2), found in Arabidopsis thaliana (Mouse-ear cress).